We begin with the raw amino-acid sequence, 127 residues long: Protein ApaG (127 aa).

In terms of domain architecture, ApaG spans 3–127 (NDQKYDIKVQ…FILSVPRVLH (125 aa)).

The chain is Protein ApaG from Nitrosomonas eutropha (strain DSM 101675 / C91 / Nm57).